Reading from the N-terminus, the 333-residue chain is Abequosyltransferase RfbV (333 aa).

The protein belongs to the glycosyltransferase 2 family.

It carries out the reaction CDP-alpha-D-abequose + alpha-D-Man-(1-&gt;4)-alpha-L-Rha-(1-&gt;3)-alpha-D-Gal-di-trans,octa-cis-undecaprenyl diphosphate = alpha-D-Abe-(1-&gt;3)-alpha-D-Man-(1-&gt;4)-alpha-L-Rha-(1-&gt;3)-alpha-D-Gal-di-trans,octa-cis-undecaprenyl diphosphate + CDP + H(+). It functions in the pathway bacterial outer membrane biogenesis; LPS O-antigen biosynthesis. Its function is as follows. Catalyzes the transfer of CDP-abequose on D-mannosyl-L-rhamnosyl-D-galactose-1-diphospholipid to yield D-abequosyl-D-mannosyl-rhamnosyl-D-galactose-1-diphospholipid. The polypeptide is Abequosyltransferase RfbV (rfbV) (Salmonella typhimurium (strain LT2 / SGSC1412 / ATCC 700720)).